The primary structure comprises 342 residues: MSSDLKSRFLQVYDTLKSELINDPAFEFDDDSRQWVEKMLDYNVPGGKLNRGLSVIDSYQLLKGGELTDNEIFLAAALGWCIEWLQAYFLVLDDIMDESHTRRGQPCWFRLPKVGMIAANDGIILRNNVPRILKKHFRGKPYYVDLLDLFNEVEFQTASGQMIDLITTLVGEKDLSKYSLSIHRRIVQYKTAYYSFYLPVACALLMFGEDLEKHEEVKNVLVEMGTYFQVQDDYLDCFGAPEVIGKIGTDIEDFKCSWLVVKALELSNEEQKKILHENYGKKDPSSVAKVKELYHTLNLQGVFEDYENTSYKKLITSIEGHPSKAVQAVLKSFLGKIYKRQK.

Positions 48, 51, and 86 each coordinate isopentenyl diphosphate. Positions 93 and 97 each coordinate Mg(2+). R102 lines the dimethylallyl diphosphate pocket. Isopentenyl diphosphate is bound at residue R103. Residues K190, T191, Q229, K246, and K255 each contribute to the dimethylallyl diphosphate site.

This sequence belongs to the FPP/GGPP synthase family. It depends on Mg(2+) as a cofactor.

Its subcellular location is the cytoplasm. The enzyme catalyses isopentenyl diphosphate + dimethylallyl diphosphate = (2E)-geranyl diphosphate + diphosphate. It catalyses the reaction isopentenyl diphosphate + (2E)-geranyl diphosphate = (2E,6E)-farnesyl diphosphate + diphosphate. It functions in the pathway isoprenoid biosynthesis; farnesyl diphosphate biosynthesis; farnesyl diphosphate from geranyl diphosphate and isopentenyl diphosphate: step 1/1. The protein operates within isoprenoid biosynthesis; geranyl diphosphate biosynthesis; geranyl diphosphate from dimethylallyl diphosphate and isopentenyl diphosphate: step 1/1. Catalyzes the sequential condensation of isopentenyl pyrophosphate with the allylic pyrophosphates, dimethylallyl pyrophosphate, and then with the resultant geranylpyrophosphate to the ultimate product farnesyl pyrophosphate. This is Farnesyl pyrophosphate synthase 1 (FPS1) from Parthenium argentatum (Guayule rubber plant).